A 304-amino-acid polypeptide reads, in one-letter code: MDKTSVYHHIPVLLKESVDGLNVCSGGIYVDVTFGGGGHSKEILVRLGNTGHLYGFDQDEDSEKNIFSDIRFTFVRSNFRYLAHFMDWHNVKEIDGLLADLGVSSIHFDDCNRGFSFRFIGNLDMRMNQRKGETAADILNTYSENKLIDMFDLYGELKNSASIAHAIVQARMQREIQTVQDFLDILKPFVRKGKVEKQLAQIFQALRIEVNKELDALKEMLIQAKQLLRSGGRIAIITYHSLEDRLVKFFFKTGSFYEKIERDFYGNFLSPFKIINHRVIVASDEEVKRNPRSRSAKLRIAEKI.

S-adenosyl-L-methionine-binding positions include 37–39, Asp57, Phe85, Asp100, and His107; that span reads GGH.

It belongs to the methyltransferase superfamily. RsmH family.

It localises to the cytoplasm. The catalysed reaction is cytidine(1402) in 16S rRNA + S-adenosyl-L-methionine = N(4)-methylcytidine(1402) in 16S rRNA + S-adenosyl-L-homocysteine + H(+). Its function is as follows. Specifically methylates the N4 position of cytidine in position 1402 (C1402) of 16S rRNA. The sequence is that of Ribosomal RNA small subunit methyltransferase H from Azobacteroides pseudotrichonymphae genomovar. CFP2.